We begin with the raw amino-acid sequence, 189 residues long: Elongation factor P (189 aa).

The protein belongs to the elongation factor P family.

It localises to the cytoplasm. It participates in protein biosynthesis; polypeptide chain elongation. Involved in peptide bond synthesis. Stimulates efficient translation and peptide-bond synthesis on native or reconstituted 70S ribosomes in vitro. Probably functions indirectly by altering the affinity of the ribosome for aminoacyl-tRNA, thus increasing their reactivity as acceptors for peptidyl transferase. The sequence is that of Elongation factor P from Rhizobium meliloti (strain 1021) (Ensifer meliloti).